The chain runs to 353 residues: Photosystem II D2 protein (353 aa).

The residue at position 2 (T2) is an N-acetylthreonine. Position 2 is a phosphothreonine (T2). The chain crosses the membrane as a helical span at residues 41-61 (CAYFALGGWFTGTTFVTSWYT). H118 contributes to the chlorophyll a binding site. A helical transmembrane segment spans residues 125 to 141 (GFMLRQFELARSVQLRP). Positions 130 and 143 each coordinate pheophytin a. A helical membrane pass occupies residues 153 to 166 (VFVSVFLIYPLGQS). H198 is a binding site for chlorophyll a. Residues 208–228 (AALLCAIHGATVENTLFEDGD) form a helical membrane-spanning segment. H215 and F262 together coordinate a plastoquinone. H215 contributes to the Fe cation binding site. Position 269 (H269) interacts with Fe cation. A helical membrane pass occupies residues 279-295 (GLWMSALGVVGLALNLR).

Belongs to the reaction center PufL/M/PsbA/D family. As to quaternary structure, PSII is composed of 1 copy each of membrane proteins PsbA, PsbB, PsbC, PsbD, PsbE, PsbF, PsbH, PsbI, PsbJ, PsbK, PsbL, PsbM, PsbT, PsbX, PsbY, PsbZ, Psb30/Ycf12, at least 3 peripheral proteins of the oxygen-evolving complex and a large number of cofactors. It forms dimeric complexes. Interacts with PAM68. Requires The D1/D2 heterodimer binds P680, chlorophylls that are the primary electron donor of PSII, and subsequent electron acceptors. It shares a non-heme iron and each subunit binds pheophytin, quinone, additional chlorophylls, carotenoids and lipids. There is also a Cl(-1) ion associated with D1 and D2, which is required for oxygen evolution. The PSII complex binds additional chlorophylls, carotenoids and specific lipids. as cofactor. Phosphorylation occurs in normal plant growth light conditions. Rapid dephosphorylation occurs during heat shock.

The protein localises to the plastid. It is found in the chloroplast thylakoid membrane. It carries out the reaction 2 a plastoquinone + 4 hnu + 2 H2O = 2 a plastoquinol + O2. Functionally, photosystem II (PSII) is a light-driven water:plastoquinone oxidoreductase that uses light energy to abstract electrons from H(2)O, generating O(2) and a proton gradient subsequently used for ATP formation. It consists of a core antenna complex that captures photons, and an electron transfer chain that converts photonic excitation into a charge separation. The D1/D2 (PsbA/PsbD) reaction center heterodimer binds P680, the primary electron donor of PSII as well as several subsequent electron acceptors. D2 is needed for assembly of a stable PSII complex. The chain is Photosystem II D2 protein from Arabidopsis thaliana (Mouse-ear cress).